We begin with the raw amino-acid sequence, 97 residues long: Small, acid-soluble spore protein gamma-type (97 aa).

Residues M1–V42 are compositionally biased toward polar residues. The tract at residues M1–G97 is disordered. 2 consecutive repeats follow at residues Q23–N56 and Q58–N91. Over residues K43–N63 the composition is skewed to low complexity. The segment covering A69–R78 has biased composition (polar residues). Residues Q79–N91 show a composition bias toward low complexity.

The protein belongs to the gamma-type SASP family.

Functionally, SASP are proteins degraded in the first minutes of spore germination and provide amino acids for both new protein synthesis and metabolism. These proteins may be involved in dormant spore's high resistance to UV light. This Priestia megaterium (Bacillus megaterium) protein is Small, acid-soluble spore protein gamma-type (sasP-B).